Consider the following 713-residue polypeptide: Signal transducer and activator of transcription 1 (713 aa).

The SH2 domain maps to 477-574; that stretch reads WCIGFISKHD…EEMLRYFESE (98 aa).

It belongs to the transcription factor STAT family. Forms a homodimer or a heterodimer with a related family member.

It localises to the cytoplasm. Its subcellular location is the nucleus. Functionally, carries out a dual function: signal transduction and activation of transcription. Activated STAT proteins play a role in repression of dauer formation. Neuronal expression is held in check by negative signals through the TGF-beta pathway that target the daf-3 transcription factor. This Caenorhabditis briggsae protein is Signal transducer and activator of transcription 1.